The chain runs to 223 residues: uncharacterized protein (223 aa).

The next 2 helical transmembrane spans lie at Met1 to Leu21 and Ile45 to Ile65.

It is found in the cell membrane. This is an uncharacterized protein from Haemophilus influenzae (strain ATCC 51907 / DSM 11121 / KW20 / Rd).